A 433-amino-acid polypeptide reads, in one-letter code: 3-phosphoshikimate 1-carboxyvinyltransferase (433 aa).

3 residues coordinate 3-phosphoshikimate: lysine 23, serine 24, and arginine 28. Lysine 23 is a binding site for phosphoenolpyruvate. Phosphoenolpyruvate-binding residues include glycine 95 and arginine 123. 3-phosphoshikimate-binding residues include serine 167, glutamine 169, aspartate 317, and lysine 344. Glutamine 169 is a phosphoenolpyruvate binding site. Aspartate 317 (proton acceptor) is an active-site residue. Arginine 348 and arginine 390 together coordinate phosphoenolpyruvate.

It belongs to the EPSP synthase family. In terms of assembly, monomer.

The protein localises to the cytoplasm. It catalyses the reaction 3-phosphoshikimate + phosphoenolpyruvate = 5-O-(1-carboxyvinyl)-3-phosphoshikimate + phosphate. It participates in metabolic intermediate biosynthesis; chorismate biosynthesis; chorismate from D-erythrose 4-phosphate and phosphoenolpyruvate: step 6/7. Catalyzes the transfer of the enolpyruvyl moiety of phosphoenolpyruvate (PEP) to the 5-hydroxyl of shikimate-3-phosphate (S3P) to produce enolpyruvyl shikimate-3-phosphate and inorganic phosphate. The chain is 3-phosphoshikimate 1-carboxyvinyltransferase from Staphylococcus epidermidis (strain ATCC 35984 / DSM 28319 / BCRC 17069 / CCUG 31568 / BM 3577 / RP62A).